The following is a 205-amino-acid chain: Large ribosomal subunit protein uL4 (205 aa).

Residues 48–79 (KAQKSRSDVSGGGKKPWKQKGSGHARAGTTRS) are disordered.

Belongs to the universal ribosomal protein uL4 family. Part of the 50S ribosomal subunit.

One of the primary rRNA binding proteins, this protein initially binds near the 5'-end of the 23S rRNA. It is important during the early stages of 50S assembly. It makes multiple contacts with different domains of the 23S rRNA in the assembled 50S subunit and ribosome. Functionally, forms part of the polypeptide exit tunnel. This Methylococcus capsulatus (strain ATCC 33009 / NCIMB 11132 / Bath) protein is Large ribosomal subunit protein uL4.